The primary structure comprises 102 residues: Urease subunit beta (102 aa).

The protein belongs to the urease beta subunit family. As to quaternary structure, heterotrimer of UreA (gamma), UreB (beta) and UreC (alpha) subunits. Three heterotrimers associate to form the active enzyme.

It localises to the cytoplasm. It carries out the reaction urea + 2 H2O + H(+) = hydrogencarbonate + 2 NH4(+). Its pathway is nitrogen metabolism; urea degradation; CO(2) and NH(3) from urea (urease route): step 1/1. The polypeptide is Urease subunit beta (Acinetobacter baylyi (strain ATCC 33305 / BD413 / ADP1)).